The chain runs to 368 residues: Ceramide synthase hyl-1 (368 aa).

The next 7 membrane-spanning stretches (helical) occupy residues 27–47, 92–112, 138–158, 165–185, 191–211, 225–245, and 275–295; these read FVDLLVPIYLAIPLVIIRILW, ILECFWRFSYYTFAFLYGLYV, IWWYYMIETGFYYSLLIGSTF, FWQLMVHHVITIFLLSSSWTI, GTLILLSHDVSDVFLEGGKLV, FVLFFSSWVATRLIYYPFIVI, and LIVFALILLFFLHIFWTFIIL. Residues 90–303 enclose the TLC domain; the sequence is KKILECFWRF…ILRIAYRTST (214 aa). Positions 306–368 are disordered; sequence QAKDVRSDSD…ARHRRAPRKE (63 aa). Residues 343–353 are compositionally biased toward acidic residues; it reads TDDDDDEGEEE. The span at 357–368 shows a compositional bias: basic residues; that stretch reads RKARHRRAPRKE.

This sequence belongs to the sphingosine N-acyltransferase family.

The protein localises to the membrane. The catalysed reaction is a very long-chain fatty acyl-CoA + a sphingoid base = an N-(very-long-chain fatty acyl)-sphingoid base + CoA + H(+). The enzyme catalyses 15-methylhexadecasphinganine + a fatty acyl-CoA = an N-acyl-15-methylhexadecasphinganine + CoA + H(+). It carries out the reaction a fatty acyl-CoA + sphinganine = an N-acylsphinganine + CoA + H(+). It catalyses the reaction sphinganine + tetradecanoyl-CoA = N-(tetradecanoyl)-sphinganine + CoA + H(+). The catalysed reaction is hexacosanoyl-CoA + sphinganine = N-hexacosanoylsphinganine + CoA + H(+). Its pathway is lipid metabolism; sphingolipid metabolism. Catalyzes the acylation of sphingoid bases to form ceramides, which are key players in cell signaling events such as extending lifespan and enhancing stress resistance. C.elegans contain specific sphingoid bases, which are unique or different in structure compared to the sphingoid bases found in other animals. Two examples of these distinctive compounds are: 15-methylhexadecasphinganine and 15-methylhexadecasphing-4-enine. Exhibits substrate preference for fatty acyl-coA chains containing carbon chain length (C16-C18) and very long chains (24 carbons and more). This Caenorhabditis elegans protein is Ceramide synthase hyl-1 (hyl-1).